The chain runs to 447 residues: Probable glycine dehydrogenase (decarboxylating) subunit 1 (447 aa).

It belongs to the GcvP family. N-terminal subunit subfamily. The glycine cleavage system is composed of four proteins: P, T, L and H. In this organism, the P 'protein' is a heterodimer of two subunits.

The enzyme catalyses N(6)-[(R)-lipoyl]-L-lysyl-[glycine-cleavage complex H protein] + glycine + H(+) = N(6)-[(R)-S(8)-aminomethyldihydrolipoyl]-L-lysyl-[glycine-cleavage complex H protein] + CO2. In terms of biological role, the glycine cleavage system catalyzes the degradation of glycine. The P protein binds the alpha-amino group of glycine through its pyridoxal phosphate cofactor; CO(2) is released and the remaining methylamine moiety is then transferred to the lipoamide cofactor of the H protein. The sequence is that of Probable glycine dehydrogenase (decarboxylating) subunit 1 from Beijerinckia indica subsp. indica (strain ATCC 9039 / DSM 1715 / NCIMB 8712).